The chain runs to 104 residues: Large ribosomal subunit protein bL21 (104 aa).

Belongs to the bacterial ribosomal protein bL21 family. Part of the 50S ribosomal subunit. Contacts protein L20.

In terms of biological role, this protein binds to 23S rRNA in the presence of protein L20. The sequence is that of Large ribosomal subunit protein bL21 from Elusimicrobium minutum (strain Pei191).